A 229-amino-acid polypeptide reads, in one-letter code: MVHPLLFLQFFRKLLEPLHISEAGADAIAYTWLIIVCLLIVSLIATKALKAVPTGMQNFMEVVIGGIENMVEETMGEKGKPYFPLIATLALFVLVSNLIGLIPGFFPPTANLNTTAACAVIVFLSTHIVGIKKHGFHYLQHFMGPIWWLAPLMFFIEIIGHLSRPLSLSLRLFGNMNGHELVLMIFFALAPFLVPLPMMLMGVLVSFIQAFVFMLLAMIYIQGSLEEAH.

6 helical membrane passes run 25-45 (ADAIAYTWLIIVCLLIVSLIA), 86-106 (IATLALFVLVSNLIGLIPGFF), 111-131 (NLNTTAACAVIVFLSTHIVGI), 142-162 (FMGPIWWLAPLMFFIEIIGHL), 181-201 (LVLMIFFALAPFLVPLPMMLM), and 202-222 (GVLVSFIQAFVFMLLAMIYIQ).

It belongs to the ATPase A chain family. F-type ATPases have 2 components, CF(1) - the catalytic core - and CF(0) - the membrane proton channel. CF(1) has five subunits: alpha(3), beta(3), gamma(1), delta(1), epsilon(1). CF(0) has three main subunits: a(1), b(2) and c(9-12). The alpha and beta chains form an alternating ring which encloses part of the gamma chain. CF(1) is attached to CF(0) by a central stalk formed by the gamma and epsilon chains, while a peripheral stalk is formed by the delta and b chains.

It is found in the cell inner membrane. In terms of biological role, key component of the proton channel; it plays a direct role in the translocation of protons across the membrane. The polypeptide is ATP synthase subunit a (Geobacter sulfurreducens (strain ATCC 51573 / DSM 12127 / PCA)).